A 764-amino-acid chain; its full sequence is FAST kinase domain-containing protein 5, mitochondrial (764 aa).

A mitochondrion-targeting transit peptide spans 1-27 (MAATLKSLKLVRYRAFCSPSAFGAVRS). S95 bears the Phosphoserine mark. An N6-acetyllysine modification is found at K507. Residues 697–757 (LAVQFTNRNQ…RLEKLAFLHE (61 aa)) form the RAP domain.

The protein belongs to the FAST kinase family. As to quaternary structure, found in a complex with GRSF1, DDX28, DHX30 and FASTKD2. Associates with the 12S mitochondrial rRNA (12S mt-rRNA). As to expression, expression detected in spleen, thymus, testis, ovary, colon, heart, smooth muscle, kidney, brain, lung, liver and white adipose tissue with highest expression in heart, smooth muscle, liver and thyroid.

The protein localises to the mitochondrion matrix. The protein resides in the mitochondrion nucleoid. In terms of biological role, plays an important role in the processing of non-canonical mitochondrial mRNA precursors. The sequence is that of FAST kinase domain-containing protein 5, mitochondrial (FASTKD5) from Homo sapiens (Human).